A 180-amino-acid chain; its full sequence is NADH-quinone oxidoreductase subunit I (180 aa).

2 consecutive 4Fe-4S ferredoxin-type domains span residues 50 to 80 and 90 to 119; these read LTRNIDGQERCVACNLCAVVCPVDCISLQKS and KFFRINFSRCIFCGLCEEACPTAAIQLMPD. Positions 60, 63, 66, 70, 99, 102, 105, and 109 each coordinate [4Fe-4S] cluster.

It belongs to the complex I 23 kDa subunit family. As to quaternary structure, NDH-1 is composed of 13 different subunits. Subunits NuoA, H, J, K, L, M, N constitute the membrane sector of the complex. The cofactor is [4Fe-4S] cluster.

Its subcellular location is the cell membrane. It carries out the reaction a quinone + NADH + 5 H(+)(in) = a quinol + NAD(+) + 4 H(+)(out). NDH-1 shuttles electrons from NADH, via FMN and iron-sulfur (Fe-S) centers, to quinones in the respiratory chain. The immediate electron acceptor for the enzyme in this species is believed to be ubiquinone. Couples the redox reaction to proton translocation (for every two electrons transferred, four hydrogen ions are translocated across the cytoplasmic membrane), and thus conserves the redox energy in a proton gradient. The protein is NADH-quinone oxidoreductase subunit I of Buchnera aphidicola subsp. Acyrthosiphon pisum (strain APS) (Acyrthosiphon pisum symbiotic bacterium).